The following is a 184-amino-acid chain: uncharacterized protein (184 aa).

This is an uncharacterized protein from Clostridium acetobutylicum (strain ATCC 824 / DSM 792 / JCM 1419 / IAM 19013 / LMG 5710 / NBRC 13948 / NRRL B-527 / VKM B-1787 / 2291 / W).